Reading from the N-terminus, the 396-residue chain is Elongation factor Tu (396 aa).

A tr-type G domain is found at 10 to 206 (KPHVNIGTIG…AVDNYIPEPE (197 aa)). The tract at residues 19–26 (GHVDHGKT) is G1. 19-26 (GHVDHGKT) provides a ligand contact to GTP. Thr26 is a binding site for Mg(2+). A G2 region spans residues 60–64 (GITIA). The G3 stretch occupies residues 81-84 (DCPG). Residues 81–85 (DCPGH) and 136–139 (NKAD) contribute to the GTP site. The tract at residues 136–139 (NKAD) is G4. A G5 region spans residues 174 to 176 (SAL).

It belongs to the TRAFAC class translation factor GTPase superfamily. Classic translation factor GTPase family. EF-Tu/EF-1A subfamily. Monomer.

It is found in the cytoplasm. It carries out the reaction GTP + H2O = GDP + phosphate + H(+). Its function is as follows. GTP hydrolase that promotes the GTP-dependent binding of aminoacyl-tRNA to the A-site of ribosomes during protein biosynthesis. The chain is Elongation factor Tu from Geobacter sulfurreducens (strain ATCC 51573 / DSM 12127 / PCA).